A 247-amino-acid chain; its full sequence is Segregation and condensation protein A (247 aa).

This sequence belongs to the ScpA family. Component of a cohesin-like complex composed of ScpA, ScpB and the Smc homodimer, in which ScpA and ScpB bind to the head domain of Smc. The presence of the three proteins is required for the association of the complex with DNA.

It localises to the cytoplasm. In terms of biological role, participates in chromosomal partition during cell division. May act via the formation of a condensin-like complex containing Smc and ScpB that pull DNA away from mid-cell into both cell halves. This chain is Segregation and condensation protein A, found in Caldanaerobacter subterraneus subsp. tengcongensis (strain DSM 15242 / JCM 11007 / NBRC 100824 / MB4) (Thermoanaerobacter tengcongensis).